Consider the following 489-residue polypeptide: MDIPLSSDALDLCFHPAAETNLLAVGLISGKIQLINYDDYLSSPSSSRTPLAPPSKKSKPSTISSAVETPTKLYRKLYTSRPSKKSCRGLHFSTTGSSIFSISKDKSLFSTDTQTGKVVQSWIEVHDAAPSRVLPVDESLVVTGDDDGVVRLWDVRKGGGKGIKPVRMWEHHFDWITDMVYLADLPVPKPKSIKEAKKSKTQLKKQRRRARQAERLKEHDKEKREQNASDTEASEPDSEDDAAIKVESRSRLIVTSGDGSLSSIDLLSSGPTSFEQSEDQEDELLSITSIRSSTKLVVGTQLGILSLWTPSRGLLDHVDRVPGHPASVDTLVTLDNETVLTGSSDGLVRVVQILPSKLLGVIASHNGLPVERMKRKQSVLASIGHTNAVKLTDLSPLLDDNDDQGDDDDEQAGALGIVGLAEDDSDDDDDDDDDDDDDDDEKHLVVELDGAEQTDGDAESGQDDEQDPDSEDVTPSQNKAGKGGFFSDL.

Residues 4–45 (PLSSDALDLCFHPAAETNLLAVGLISGKIQLINYDDYLSSPS) form a WD 1 repeat. The segment at 46-66 (SSRTPLAPPSKKSKPSTISSA) is disordered. One copy of the WD 2 repeat lies at 124–163 (EVHDAAPSRVLPVDESLVVTGDDDGVVRLWDVRKGGGKGI). Residues 192 to 246 (SIKEAKKSKTQLKKQRRRARQAERLKEHDKEKREQNASDTEASEPDSEDDAAIKV) form a disordered region. Over residues 199–210 (SKTQLKKQRRRA) the composition is skewed to basic residues. Residues 211–227 (RQAERLKEHDKEKREQN) show a composition bias toward basic and acidic residues. Residues 232-241 (EASEPDSEDD) are compositionally biased toward acidic residues. 2 WD repeats span residues 279 to 318 (DQEDELLSITSIRSSTKLVVGTQLGILSLWTPSRGLLDHV) and 323 to 363 (GHPA…GVIA). The disordered stretch occupies residues 417-489 (IVGLAEDDSD…AGKGGFFSDL (73 aa)). 2 stretches are compositionally biased toward acidic residues: residues 421–440 (AEDDSDDDDDDDDDDDDDDD) and 449–472 (DGAEQTDGDAESGQDDEQDPDSED).

The protein belongs to the WD repeat WDR55 family.

The protein resides in the nucleus. Its subcellular location is the nucleolus. The polypeptide is WD repeat-containing protein JIP5 (JIP5) (Mycosarcoma maydis (Corn smut fungus)).